Reading from the N-terminus, the 426-residue chain is Histidinol dehydrogenase (426 aa).

NAD(+) is bound by residues Tyr125, Gln187, and Asn210. Substrate contacts are provided by Ser233, Gln255, and His258. Residues Gln255 and His258 each coordinate Zn(2+). Active-site proton acceptor residues include Glu323 and His324. 4 residues coordinate substrate: His324, Asp357, Glu411, and His416. Asp357 serves as a coordination point for Zn(2+). His416 contacts Zn(2+).

This sequence belongs to the histidinol dehydrogenase family. Requires Zn(2+) as cofactor.

The catalysed reaction is L-histidinol + 2 NAD(+) + H2O = L-histidine + 2 NADH + 3 H(+). The protein operates within amino-acid biosynthesis; L-histidine biosynthesis; L-histidine from 5-phospho-alpha-D-ribose 1-diphosphate: step 9/9. Functionally, catalyzes the sequential NAD-dependent oxidations of L-histidinol to L-histidinaldehyde and then to L-histidine. This Methanothermobacter thermautotrophicus (strain ATCC 29096 / DSM 1053 / JCM 10044 / NBRC 100330 / Delta H) (Methanobacterium thermoautotrophicum) protein is Histidinol dehydrogenase (hisD).